A 341-amino-acid chain; its full sequence is Ketol-acid reductoisomerase (NADP(+)) (341 aa).

The region spanning 3-184 (LKVYYDKDCD…GGGRSGIIET (182 aa)) is the KARI N-terminal Rossmann domain. NADP(+) is bound by residues 26-29 (FGSQ), S54, and 84-87 (DELQ). Residue H109 is part of the active site. Residue G135 participates in NADP(+) binding. In terms of domain architecture, KARI C-terminal knotted spans 185–330 (TFKDETETDL…GRLRAMMPWI (146 aa)). 4 residues coordinate Mg(2+): D193, E197, E229, and E233. Position 254 (S254) interacts with substrate.

Belongs to the ketol-acid reductoisomerase family. It depends on Mg(2+) as a cofactor.

It catalyses the reaction (2R)-2,3-dihydroxy-3-methylbutanoate + NADP(+) = (2S)-2-acetolactate + NADPH + H(+). The enzyme catalyses (2R,3R)-2,3-dihydroxy-3-methylpentanoate + NADP(+) = (S)-2-ethyl-2-hydroxy-3-oxobutanoate + NADPH + H(+). Its pathway is amino-acid biosynthesis; L-isoleucine biosynthesis; L-isoleucine from 2-oxobutanoate: step 2/4. It participates in amino-acid biosynthesis; L-valine biosynthesis; L-valine from pyruvate: step 2/4. In terms of biological role, involved in the biosynthesis of branched-chain amino acids (BCAA). Catalyzes an alkyl-migration followed by a ketol-acid reduction of (S)-2-acetolactate (S2AL) to yield (R)-2,3-dihydroxy-isovalerate. In the isomerase reaction, S2AL is rearranged via a Mg-dependent methyl migration to produce 3-hydroxy-3-methyl-2-ketobutyrate (HMKB). In the reductase reaction, this 2-ketoacid undergoes a metal-dependent reduction by NADPH to yield (R)-2,3-dihydroxy-isovalerate. The polypeptide is Ketol-acid reductoisomerase (NADP(+)) (Helicobacter hepaticus (strain ATCC 51449 / 3B1)).